A 498-amino-acid polypeptide reads, in one-letter code: Cytoskeletal signaling protein slm1 (498 aa).

Residues 1-23 (MELSGKSEFPTRTEIPNQASNGD) are disordered. Phosphoserine occurs at positions 175 and 312. Residues 300–405 (VPIMAGYLIR…WWEALNTHIA (106 aa)) form the PH domain. The disordered stretch occupies residues 416–475 (ANGPSAVSDSDDDDDDPNDFRPAVERQSSTMNTRMSQPSSAVNTNRSYGSEQIPSYADSQ). The segment covering 441-475 (RQSSTMNTRMSQPSSAVNTNRSYGSEQIPSYADSQ) has biased composition (polar residues).

The protein localises to the cell tip. Effector of the TORC2- and calcineurin-signaling pathways. Mediates actin polarization via inhibition of calcineurin-dependent transcription. May play a role in the response to the disruption of sphingolipid synthesis, where dephosphorylation of slm1 leads to the activation and phosphorylation of ypk1 through the TORC2 and PKH1 pathways, which in turn phosphorylates orm1 and lag1 to activate sphingolipid synthesis. This Schizosaccharomyces pombe (strain 972 / ATCC 24843) (Fission yeast) protein is Cytoskeletal signaling protein slm1 (slm1).